The chain runs to 436 residues: tRNA-2-methylthio-N(6)-dimethylallyladenosine synthase (436 aa).

The region spanning lysine 5–alanine 120 is the MTTase N-terminal domain. Residues cysteine 14, cysteine 51, cysteine 83, cysteine 152, cysteine 156, and cysteine 159 each coordinate [4Fe-4S] cluster. Positions lysine 138–glutamate 372 constitute a Radical SAM core domain. The 62-residue stretch at proline 375–asparagine 436 folds into the TRAM domain.

It belongs to the methylthiotransferase family. MiaB subfamily. Monomer. Requires [4Fe-4S] cluster as cofactor.

It localises to the cytoplasm. The enzyme catalyses N(6)-dimethylallyladenosine(37) in tRNA + (sulfur carrier)-SH + AH2 + 2 S-adenosyl-L-methionine = 2-methylsulfanyl-N(6)-dimethylallyladenosine(37) in tRNA + (sulfur carrier)-H + 5'-deoxyadenosine + L-methionine + A + S-adenosyl-L-homocysteine + 2 H(+). In terms of biological role, catalyzes the methylthiolation of N6-(dimethylallyl)adenosine (i(6)A), leading to the formation of 2-methylthio-N6-(dimethylallyl)adenosine (ms(2)i(6)A) at position 37 in tRNAs that read codons beginning with uridine. The chain is tRNA-2-methylthio-N(6)-dimethylallyladenosine synthase from Aliarcobacter butzleri (strain RM4018) (Arcobacter butzleri).